Consider the following 375-residue polypeptide: Putative monooxygenase Rv1533 (375 aa).

Residues glutamine 190, glycine 195, glycine 224, and 243 to 246 (WCGS) contribute to the FMN site.

Belongs to the nitronate monooxygenase family. FMN is required as a cofactor.

This Mycobacterium tuberculosis (strain ATCC 25618 / H37Rv) protein is Putative monooxygenase Rv1533.